The chain runs to 253 residues: uncharacterized protein (253 aa).

Residues 200-209 (TGREHAHKGP) show a composition bias toward basic and acidic residues. Disordered regions lie at residues 200 to 225 (TGREHAHKGPELTTPDSGLPRPPNPA) and 234 to 253 (QHSPPLGTSTPSAVLLSAAT).

In terms of tissue distribution, most abundantly expressed in gastrointestinal tissues. Expressed at lower levels in kidney and placenta. Expressed in fetal brain, liver, placenta, kidney and lung.

This is an uncharacterized protein from Homo sapiens (Human).